Consider the following 309-residue polypeptide: tRNA pseudouridine synthase B (309 aa).

D39 functions as the Nucleophile in the catalytic mechanism.

This sequence belongs to the pseudouridine synthase TruB family. Type 1 subfamily.

The catalysed reaction is uridine(55) in tRNA = pseudouridine(55) in tRNA. Its function is as follows. Responsible for synthesis of pseudouridine from uracil-55 in the psi GC loop of transfer RNAs. The polypeptide is tRNA pseudouridine synthase B (Bacillus subtilis (strain 168)).